Here is a 534-residue protein sequence, read N- to C-terminus: Thromboxane-A synthase (534 aa).

The Cytoplasmic segment spans residues 1–10 (MEVLGFLSPE). Residues 11–31 (LNGPMVTMALAVVLLALLKWY) form a helical membrane-spanning segment. The Lumenal portion of the chain corresponds to 32–75 (STSAFSRLEKLGIRHPKPSPFIGNLTFFRQGFWESHMELRKQYG). The chain crosses the membrane as a helical span at residues 76–96 (PLSGYYLGRRMIVVISDPDMI). The Cytoplasmic segment spans residues 97–223 (KQVLAEKFSN…RRFFAFSVPR (127 aa)). A helical transmembrane segment spans residues 224–244 (LILVLILSFPSIMVPLARILP). The Lumenal segment spans residues 245-336 (NKKRDEVNGF…LTVDEVVGQA (92 aa)). Residues 337 to 357 (FLFLIAGYEIITNTLSFVTYL) traverse the membrane as a helical segment. The Cytoplasmic segment spans residues 358–534 (LATNPDCQEK…NGVYIRIVPR (177 aa)). Cysteine 480 lines the heme pocket.

The protein belongs to the cytochrome P450 family. In terms of assembly, monomer. Heme is required as a cofactor. As to expression, expressed in lung, kidney and thymus.

It localises to the endoplasmic reticulum membrane. The catalysed reaction is prostaglandin H2 = thromboxane A2. It catalyses the reaction prostaglandin H2 = (12S)-hydroxy-(5Z,8E,10E)-heptadecatrienoate + malonaldehyde. The enzyme catalyses a hydroperoxyeicosatetraenoate = an oxoeicosatetraenoate + H2O. It carries out the reaction (15S)-hydroperoxy-(5Z,8Z,11Z,13E)-eicosatetraenoate = 15-oxo-(5Z,8Z,11Z,13E)-eicosatetraenoate + H2O. The catalysed reaction is (15S)-hydroperoxy-(5Z,8Z,11Z,13E)-eicosatetraenoate + AH2 = (15S)-hydroxy-(5Z,8Z,11Z,13E)-eicosatetraenoate + A + H2O. Its function is as follows. Catalyzes the conversion of prostaglandin H2 (PGH2) to thromboxane A2 (TXA2), a potent inducer of blood vessel constriction and platelet aggregation. Also cleaves PGH2 to 12-hydroxy-heptadecatrienoicacid (12-HHT) and malondialdehyde, which is known to act as a mediator of DNA damage. 12-HHT and malondialdehyde are formed stoichiometrically in the same amounts as TXA2. Additionally, displays dehydratase activity, toward (15S)-hydroperoxy-(5Z,8Z,11Z,13E)-eicosatetraenoate (15(S)-HPETE) producing 15-KETE and 15-HETE. The protein is Thromboxane-A synthase (TBXAS1) of Sus scrofa (Pig).